A 269-amino-acid chain; its full sequence is Expansin-A32 (269 aa).

The first 25 residues, methionine 1–alanine 25, serve as a signal peptide directing secretion. The Expansin-like EG45 domain occupies aspartate 60–glycine 174. Residues tyrosine 184–alanine 264 enclose the Expansin-like CBD domain.

Belongs to the expansin family. Expansin A subfamily.

The protein localises to the secreted. It localises to the cell wall. Its subcellular location is the membrane. Its function is as follows. May cause loosening and extension of plant cell walls by disrupting non-covalent bonding between cellulose microfibrils and matrix glucans. No enzymatic activity has been found. May be required for rapid internodal elongation in deepwater rice during submergence. The sequence is that of Expansin-A32 (EXPA32) from Oryza sativa subsp. japonica (Rice).